A 1305-amino-acid chain; its full sequence is Contactin-associated protein like 5-1 (1305 aa).

Positions 1–24 (MDSLQRLNGLLTLVLSALWHLGLT) are cleaved as a signal peptide. Residues 25–174 (ASNYNCDDPL…IGMRVEAYGC (150 aa)) form the F5/8 type C domain. Laminin G-like domains follow at residues 180–360 (VADF…TFSC) and 367–544 (PITF…IDLC). Asn282 is a glycosylation site (N-linked (GlcNAc...) asparagine). Cys329 and Cys360 form a disulfide bridge. Asn496 carries an N-linked (GlcNAc...) asparagine glycan. Disulfide bonds link Cys512-Cys544, Cys550-Cys561, and Cys555-Cys570. Residues 546 to 583 (IKDRCLPNYCEHGGHCAQTWTTFYCNCSDTGYTGATCH) form the EGF-like 1 domain. Asn571 carries an N-linked (GlcNAc...) asparagine glycan. A disulfide bridge links Cys572 with Cys582. Residues 584 to 790 (DSIYEQSCEV…LRCNGDRHFW (207 aa)) enclose the Fibrinogen C-terminal domain. Asn622 carries an N-linked (GlcNAc...) asparagine glycan. The 166-residue stretch at 791-956 (NAVSFSTEAS…KLMSGVTPGC (166 aa)) folds into the Laminin G-like 3 domain. 4 disulfides stabilise this stretch: Cys929/Cys956, Cys960/Cys973, Cys967/Cys982, and Cys984/Cys994. One can recognise an EGF-like 2 domain in the interval 957–995 (PGHCSSYSSNCHNGGKCVEKQSGYSCDCTNSPNEGPFCQ). One can recognise a Laminin G-like 4 domain in the interval 1014 to 1198 (EPYLVIKNTS…VHGTLTESGC (185 aa)). An N-linked (GlcNAc...) asparagine glycan is attached at Asn1057. The cysteines at positions 1163 and 1198 are disulfide-linked. Residues 1238–1258 (VIGGIIAVVTFVTFCVIGIMI) form a helical membrane-spanning segment.

The protein belongs to the neurexin family.

Its subcellular location is the membrane. Functionally, may play a role in the correct development and proper functioning of the peripheral and central nervous system and be involved in cell adhesion and intercellular communication. This is Contactin-associated protein like 5-1 (Cntnap5a) from Rattus norvegicus (Rat).